A 154-amino-acid polypeptide reads, in one-letter code: MYKMQLLCCIALTLALMANGAPTSSSTKNTKKQLEPLLLDLQLLLKEVKNYENADLSRMLTFKFYMPKQATELKHLQCLVEELKALEGVLNLGQSKNSDSANIKESMNNINVTVLELKGSETSFKCEYDDETVTAVEFLNKWITFCQSIYSTLT.

The first 20 residues, 1 to 20, serve as a signal peptide directing secretion; sequence MYKMQLLCCIALTLALMANG. Thr-23 carries an O-linked (GalNAc...) threonine glycan. Cys-78 and Cys-126 form a disulfide bridge.

The protein belongs to the IL-2 family.

Its subcellular location is the secreted. Cytokine produced by activated CD4-positive helper T-cells and to a lesser extend activated CD8-positive T-cells and natural killer (NK) cells that plays pivotal roles in the immune response and tolerance. Binds to a receptor complex composed of either the high-affinity trimeric IL-2R (IL2RA/CD25, IL2RB/CD122 and IL2RG/CD132) or the low-affinity dimeric IL-2R (IL2RB and IL2RG). Interaction with the receptor leads to oligomerization and conformation changes in the IL-2R subunits resulting in downstream signaling starting with phosphorylation of JAK1 and JAK3. In turn, JAK1 and JAK3 phosphorylate the receptor to form a docking site leading to the phosphorylation of several substrates including STAT5. This process leads to activation of several pathways including STAT, phosphoinositide-3-kinase/PI3K and mitogen-activated protein kinase/MAPK pathways. Functions as a T-cell growth factor and can increase NK-cell cytolytic activity as well. Promotes strong proliferation of activated B-cells and subsequently immunoglobulin production. Plays a pivotal role in regulating the adaptive immune system by controlling the survival and proliferation of regulatory T-cells, which are required for the maintenance of immune tolerance. Moreover, participates in the differentiation and homeostasis of effector T-cell subsets, including Th1, Th2, Th17 as well as memory CD8-positive T-cells. This chain is Interleukin-2 (IL2), found in Sus scrofa (Pig).